We begin with the raw amino-acid sequence, 62 residues long: DNA-directed RNA polymerase subunit Rpo10 (62 aa).

Zn(2+) contacts are provided by C6, C9, C43, and C44.

The protein belongs to the archaeal Rpo10/eukaryotic RPB10 RNA polymerase subunit family. Part of the RNA polymerase complex. Zn(2+) serves as cofactor.

The protein resides in the cytoplasm. It catalyses the reaction RNA(n) + a ribonucleoside 5'-triphosphate = RNA(n+1) + diphosphate. Functionally, DNA-dependent RNA polymerase (RNAP) catalyzes the transcription of DNA into RNA using the four ribonucleoside triphosphates as substrates. This is DNA-directed RNA polymerase subunit Rpo10 from Methanosarcina mazei (strain ATCC BAA-159 / DSM 3647 / Goe1 / Go1 / JCM 11833 / OCM 88) (Methanosarcina frisia).